Reading from the N-terminus, the 313-residue chain is 4-hydroxy-3-methylbut-2-enyl diphosphate reductase (313 aa).

Cys12 contacts [4Fe-4S] cluster. (2E)-4-hydroxy-3-methylbut-2-enyl diphosphate contacts are provided by His41 and His74. Residues His41 and His74 each coordinate dimethylallyl diphosphate. Residues His41 and His74 each coordinate isopentenyl diphosphate. [4Fe-4S] cluster is bound at residue Cys96. Position 124 (His124) interacts with (2E)-4-hydroxy-3-methylbut-2-enyl diphosphate. His124 contacts dimethylallyl diphosphate. An isopentenyl diphosphate-binding site is contributed by His124. Catalysis depends on Glu126, which acts as the Proton donor. Thr167 is a binding site for (2E)-4-hydroxy-3-methylbut-2-enyl diphosphate. Cys197 is a binding site for [4Fe-4S] cluster. (2E)-4-hydroxy-3-methylbut-2-enyl diphosphate is bound by residues Ser225, Ser226, Asn227, and Ser269. Positions 225, 226, 227, and 269 each coordinate dimethylallyl diphosphate. Positions 225, 226, 227, and 269 each coordinate isopentenyl diphosphate.

It belongs to the IspH family. Requires [4Fe-4S] cluster as cofactor.

It catalyses the reaction isopentenyl diphosphate + 2 oxidized [2Fe-2S]-[ferredoxin] + H2O = (2E)-4-hydroxy-3-methylbut-2-enyl diphosphate + 2 reduced [2Fe-2S]-[ferredoxin] + 2 H(+). The enzyme catalyses dimethylallyl diphosphate + 2 oxidized [2Fe-2S]-[ferredoxin] + H2O = (2E)-4-hydroxy-3-methylbut-2-enyl diphosphate + 2 reduced [2Fe-2S]-[ferredoxin] + 2 H(+). Its pathway is isoprenoid biosynthesis; dimethylallyl diphosphate biosynthesis; dimethylallyl diphosphate from (2E)-4-hydroxy-3-methylbutenyl diphosphate: step 1/1. It participates in isoprenoid biosynthesis; isopentenyl diphosphate biosynthesis via DXP pathway; isopentenyl diphosphate from 1-deoxy-D-xylulose 5-phosphate: step 6/6. Its function is as follows. Catalyzes the conversion of 1-hydroxy-2-methyl-2-(E)-butenyl 4-diphosphate (HMBPP) into a mixture of isopentenyl diphosphate (IPP) and dimethylallyl diphosphate (DMAPP). Acts in the terminal step of the DOXP/MEP pathway for isoprenoid precursor biosynthesis. The sequence is that of 4-hydroxy-3-methylbut-2-enyl diphosphate reductase from Photobacterium profundum (strain SS9).